A 1938-amino-acid polypeptide reads, in one-letter code: Myosin-13 (1938 aa).

In terms of domain architecture, Myosin N-terminal SH3-like spans 33 to 82; it reads DSKKACFVADNKEMYVKGMIQTRENDKVIVKTLDDRMLTLNNDQVFPMNP. The 697-residue stretch at 86–782 folds into the Myosin motor domain; it reads DKIEDMAMMT…LLGLLEEMRD (697 aa). Lysine 130 bears the N6,N6,N6-trimethyllysine mark. ATP is bound at residue 179–186; that stretch reads GESGAGKT. Actin-binding stretches follow at residues 659-681 and 761-775; these read LNKL…IPNE and RFGN…GLLG. Residues 785–814 enclose the IQ domain; that stretch reads LVTLMTSTQAVCRGYLMRVEFKKMMERRDS. The stretch at 843-1938 forms a coiled coil; sequence LLKSAEAEKE…RDVGSQKMEE (1096 aa). The interval 1917 to 1938 is disordered; the sequence is AESQVNKLRAKSRDVGSQKMEE. Basic and acidic residues predominate over residues 1927-1938; it reads KSRDVGSQKMEE.

Belongs to the TRAFAC class myosin-kinesin ATPase superfamily. Myosin family. As to quaternary structure, muscle myosin is a hexameric protein that consists of 2 heavy chain subunits (MHC), 2 alkali light chain subunits (MLC) and 2 regulatory light chain subunits (MLC-2). In terms of tissue distribution, specifically expressed in extraocular and laryngeal muscles.

It is found in the cytoplasm. The protein localises to the myofibril. Fast twitching myosin mediating the high-velocity and low-tension contractions of specific striated muscles. This chain is Myosin-13 (MYH13), found in Homo sapiens (Human).